The following is a 149-amino-acid chain: Transcriptional regulator MraZ (149 aa).

SpoVT-AbrB domains lie at 7 to 54 (KYVN…GISH) and 83 to 126 (AVQL…QPQN).

It belongs to the MraZ family. In terms of assembly, forms oligomers.

The protein resides in the cytoplasm. Its subcellular location is the nucleoid. The chain is Transcriptional regulator MraZ from Rickettsia conorii (strain ATCC VR-613 / Malish 7).